Consider the following 271-residue polypeptide: Large ribosomal subunit protein uL18 (271 aa).

The span at 245-264 (IRENPCPPKKERTKPADAKR) shows a compositional bias: basic and acidic residues. The interval 245 to 271 (IRENPCPPKKERTKPADAKRWSPQAHL) is disordered.

It belongs to the universal ribosomal protein uL18 family. As to quaternary structure, component of the large ribosomal subunit (LSU).

It is found in the cytoplasm. The protein localises to the nucleus. In terms of biological role, component of the ribosome, a large ribonucleoprotein complex responsible for the synthesis of proteins in the cell. The small ribosomal subunit (SSU) binds messenger RNAs (mRNAs) and translates the encoded message by selecting cognate aminoacyl-transfer RNA (tRNA) molecules. The large subunit (LSU) contains the ribosomal catalytic site termed the peptidyl transferase center (PTC), which catalyzes the formation of peptide bonds, thereby polymerizing the amino acids delivered by tRNAs into a polypeptide chain. The nascent polypeptides leave the ribosome through a tunnel in the LSU and interact with protein factors that function in enzymatic processing, targeting, and the membrane insertion of nascent chains at the exit of the ribosomal tunnel. This is Large ribosomal subunit protein uL18 (RPL5) from Dunaliella salina (Green alga).